Here is a 645-residue protein sequence, read N- to C-terminus: MSIHITFPDGAVKPFDSGITTFDVAKSISNSLAKKALAGKFNGVLIDLDRPIVEDGSLEIVTPDHEDALGILRHSSAHLMANALRRLFPNIKFGVGPAIDSGFYYDTDNGESPVTAEDLPAIEAEMMKIVKENNPIVRKEISRAEALELFADDPYKVELITDLPEDEIITVYDQGDFVDLCRGVHVPSTGRIQVFKLLSVAGAYWRGNSDNHMMQRIYGTAFFDKKDLKEFIKMREEAKERDHRKLGKELDLFMVSQEVGSGLPFWLPKGATIRRTIERYIVDKEISLGYQHVYTPIMADVELYKTSGHWDHYHEDMFPPMDMGDGEMLVLRPMNCPHHMMVYKNDIHSYRELPIRIAELGMMHRYEKSGALSGLQRVREMTLNDGHTFVRPDQIKDEFKRTLELMVAVYADFNITDYRFRLSYRDPNNTDKYFDDDAMWEKAQAMLKAAMDELELDYFEAEGEAAFYGPKLDVQVKTALGMEETLSTIQLDFLLPERFDLTYVGEDGENTHRPVVIHRGIVSTMERFVAYLTEVYKGAFPTWLAPIQATIIPVSVEAHSEYAYEIKERLQAQGLRVEVDDRNEKMGYKIRASQTQKVPYQLVVGDKEMEDATVNVRRYGSKETSVEDLSIFIDSMAAEVHNYSR.

One can recognise a TGS domain in the interval Met1–Thr62. A catalytic region spans residues Asp242–Pro541. Cys336, His387, and His518 together coordinate Zn(2+).

This sequence belongs to the class-II aminoacyl-tRNA synthetase family. As to quaternary structure, homodimer. It depends on Zn(2+) as a cofactor.

Its subcellular location is the cytoplasm. The enzyme catalyses tRNA(Thr) + L-threonine + ATP = L-threonyl-tRNA(Thr) + AMP + diphosphate + H(+). Its function is as follows. Catalyzes the attachment of threonine to tRNA(Thr) in a two-step reaction: L-threonine is first activated by ATP to form Thr-AMP and then transferred to the acceptor end of tRNA(Thr). Also edits incorrectly charged L-seryl-tRNA(Thr). In Enterococcus faecalis (strain ATCC 700802 / V583), this protein is Threonine--tRNA ligase.